The sequence spans 77 residues: Secapin (77 aa).

A signal peptide spans 1-32 (MKNYSKNATHLITVLLFSFVVILLIIPSKCEA). Positions 33-52 (VSNDMQPLEARSADLIPEPR) are excised as a propeptide. Cysteine 61 and cysteine 72 are oxidised to a cystine.

This sequence belongs to the secapin family. Expressed by the venom gland.

The protein resides in the secreted. Nontoxic peptide. This Vespa velutina nigrithorax (Hornet) protein is Secapin.